The sequence spans 437 residues: GTPase Obg (437 aa).

One can recognise an Obg domain in the interval 2–160 (SMFLDTAKIS…RQLELELKIL (159 aa)). An OBG-type G domain is found at 161-338 (ADVGLVGFPS…LLEATAELLA (178 aa)). GTP-binding positions include 167-174 (GFPSVGKS), 192-196 (FTTIV), 214-217 (DLPG), 284-287 (NKMD), and 319-321 (SSL). Mg(2+) is bound by residues Ser174 and Thr194. The OCT domain occupies 359–437 (GFAETEKNFE…IGKFEFEFVD (79 aa)).

It belongs to the TRAFAC class OBG-HflX-like GTPase superfamily. OBG GTPase family. Monomer. Mg(2+) serves as cofactor.

It localises to the cytoplasm. In terms of biological role, an essential GTPase which binds GTP, GDP and possibly (p)ppGpp with moderate affinity, with high nucleotide exchange rates and a fairly low GTP hydrolysis rate. Plays a role in control of the cell cycle, stress response, ribosome biogenesis and in those bacteria that undergo differentiation, in morphogenesis control. The polypeptide is GTPase Obg (Streptococcus pyogenes serotype M49 (strain NZ131)).